The primary structure comprises 290 residues: Acetyl-coenzyme A carboxylase carboxyl transferase subunit beta (290 aa).

Positions 27–290 constitute a CoA carboxyltransferase N-terminal domain; sequence LWVKCPSCES…LQKQPADAVA (264 aa). Zn(2+) contacts are provided by cysteine 31, cysteine 34, cysteine 50, and cysteine 53. The C4-type zinc finger occupies 31-53; that stretch reads CPSCESTLYRTDVEANLHVCPKC.

Belongs to the AccD/PCCB family. Acetyl-CoA carboxylase is a heterohexamer composed of biotin carboxyl carrier protein (AccB), biotin carboxylase (AccC) and two subunits each of ACCase subunit alpha (AccA) and ACCase subunit beta (AccD). Zn(2+) serves as cofactor.

The protein localises to the cytoplasm. The enzyme catalyses N(6)-carboxybiotinyl-L-lysyl-[protein] + acetyl-CoA = N(6)-biotinyl-L-lysyl-[protein] + malonyl-CoA. Its pathway is lipid metabolism; malonyl-CoA biosynthesis; malonyl-CoA from acetyl-CoA: step 1/1. Functionally, component of the acetyl coenzyme A carboxylase (ACC) complex. Biotin carboxylase (BC) catalyzes the carboxylation of biotin on its carrier protein (BCCP) and then the CO(2) group is transferred by the transcarboxylase to acetyl-CoA to form malonyl-CoA. The protein is Acetyl-coenzyme A carboxylase carboxyl transferase subunit beta of Cupriavidus taiwanensis (strain DSM 17343 / BCRC 17206 / CCUG 44338 / CIP 107171 / LMG 19424 / R1) (Ralstonia taiwanensis (strain LMG 19424)).